The sequence spans 126 residues: C-type natriuretic peptide (126 aa).

The N-terminal stretch at 1-23 (MHLSQLLACALLLTLLSLRPSEA) is a signal peptide. The disordered stretch occupies residues 19 to 72 (RPSEAKPGAPPKVPRTPPGEEVAEPQAAGGGQKKGDKTPGGGGANLKGDRSRLL). The propeptide occupies 24–73 (KPGAPPKVPRTPPGEEVAEPQAAGGGQKKGDKTPGGGGANLKGDRSRLLR). The span at 26 to 35 (GAPPKVPRTP) shows a compositional bias: pro residues. Gly residues predominate over residues 46–63 (AGGGQKKGDKTPGGGGAN). Cys110 and Cys126 are oxidised to a cystine.

Belongs to the natriuretic peptide family. In terms of processing, degraded by IDE (in vitro).

The protein resides in the secreted. Hormone which plays a role in endochondral ossification through regulation of cartilaginous growth plate chondrocytes proliferation and differentiation. May also be vasoactive and natriuretic. Acts by specifically binding and stimulating NPR2 to produce cGMP. Binds the clearance receptor NPR3. The protein is C-type natriuretic peptide (NPPC) of Sus scrofa (Pig).